The sequence spans 183 residues: Acidic proline-rich protein HP43A (183 aa).

Positions 1-14 are cleaved as a signal peptide; sequence MLVVLLTAALLAEH. The interval 22–183 is disordered; it reads ISQLSEEEQQ…QGSEEQSTSL (162 aa). Positions 52–65 are enriched in acidic residues; that stretch reads SDEEGDDDGEEDGN. Tandem repeats lie at residues 81 to 100, 101 to 120, 121 to 140, 141 to 160, and 161 to 180. The span at 86–183 shows a compositional bias: low complexity; that stretch reads GNQQGPPQQE…QGSEEQSTSL (98 aa).

The protein resides in the secreted. This is Acidic proline-rich protein HP43A (H29) from Mesocricetus auratus (Golden hamster).